The sequence spans 252 residues: Receptor expression-enhancing protein 3-B (252 aa).

The next 3 helical transmembrane spans lie at 1–21 (MVSG…YPAY), 35–55 (YVRW…ETIA), and 57–77 (LTVS…VWLL). The segment at 163–225 (ETAETRFFPD…GLRRSQSMRS (63 aa)) is disordered. Positions 198–211 (RTDEDVEVNSEDEV) are enriched in acidic residues.

Belongs to the DP1 family.

The protein resides in the endoplasmic reticulum membrane. Functionally, microtubule-binding protein required to ensure proper cell division and nuclear envelope reassembly by sequestering the endoplasmic reticulum away from chromosomes during mitosis. Probably acts by clearing the endoplasmic reticulum membrane from metaphase chromosomes. The chain is Receptor expression-enhancing protein 3-B (reep3-b) from Xenopus laevis (African clawed frog).